The following is a 435-amino-acid chain: Serine--tRNA ligase (435 aa).

Residue 240 to 242 (TAE) participates in L-serine binding. ATP is bound at residue 271 to 273 (RSE). Glu294 is a binding site for L-serine. 358–361 (EISS) lines the ATP pocket. Ser393 serves as a coordination point for L-serine.

This sequence belongs to the class-II aminoacyl-tRNA synthetase family. Type-1 seryl-tRNA synthetase subfamily. In terms of assembly, homodimer. The tRNA molecule binds across the dimer.

Its subcellular location is the cytoplasm. It catalyses the reaction tRNA(Ser) + L-serine + ATP = L-seryl-tRNA(Ser) + AMP + diphosphate + H(+). The catalysed reaction is tRNA(Sec) + L-serine + ATP = L-seryl-tRNA(Sec) + AMP + diphosphate + H(+). It functions in the pathway aminoacyl-tRNA biosynthesis; selenocysteinyl-tRNA(Sec) biosynthesis; L-seryl-tRNA(Sec) from L-serine and tRNA(Sec): step 1/1. Its function is as follows. Catalyzes the attachment of serine to tRNA(Ser). Is also able to aminoacylate tRNA(Sec) with serine, to form the misacylated tRNA L-seryl-tRNA(Sec), which will be further converted into selenocysteinyl-tRNA(Sec). The polypeptide is Serine--tRNA ligase (Cupriavidus metallidurans (strain ATCC 43123 / DSM 2839 / NBRC 102507 / CH34) (Ralstonia metallidurans)).